A 993-amino-acid chain; its full sequence is ER membrane protein complex subunit 1 (993 aa).

The N-terminal stretch at 1 to 22 (MAAEWASRFWLWATLLIPAAAV) is a signal peptide. Over 23–962 (YEDQVGKFDW…FDVLKDDYDY (940 aa)) the chain is Lumenal. Disulfide bonds link Cys-227–Cys-237 and Cys-338–Cys-368. 3 N-linked (GlcNAc...) asparagine glycosylation sites follow: Asn-370, Asn-818, and Asn-913. A helical transmembrane segment spans residues 963 to 983 (VLISSVLFGLVFATMITKRLA). Topologically, residues 984–993 (QVKLLNRAWR) are cytoplasmic.

Belongs to the EMC1 family. In terms of assembly, component of the ER membrane protein complex (EMC).

It is found in the endoplasmic reticulum membrane. Part of the endoplasmic reticulum membrane protein complex (EMC) that enables the energy-independent insertion into endoplasmic reticulum membranes of newly synthesized membrane proteins. Preferentially accommodates proteins with transmembrane domains that are weakly hydrophobic or contain destabilizing features such as charged and aromatic residues. Involved in the cotranslational insertion of multi-pass membrane proteins in which stop-transfer membrane-anchor sequences become ER membrane spanning helices. It is also required for the post-translational insertion of tail-anchored/TA proteins in endoplasmic reticulum membranes. By mediating the proper cotranslational insertion of N-terminal transmembrane domains in an N-exo topology, with translocated N-terminus in the lumen of the ER, controls the topology of multi-pass membrane proteins like the G protein-coupled receptors. By regulating the insertion of various proteins in membranes, it is indirectly involved in many cellular processes. The polypeptide is ER membrane protein complex subunit 1 (EMC1) (Homo sapiens (Human)).